The following is a 121-amino-acid chain: Small ribosomal subunit protein uS13 (121 aa).

Residues 91-121 are disordered; it reads HRMSLPVRGQRTRTNARTRRGSRKTVAGRKK. Positions 100-121 are enriched in basic residues; it reads QRTRTNARTRRGSRKTVAGRKK.

The protein belongs to the universal ribosomal protein uS13 family. As to quaternary structure, part of the 30S ribosomal subunit. Forms a loose heterodimer with protein S19. Forms two bridges to the 50S subunit in the 70S ribosome.

Its function is as follows. Located at the top of the head of the 30S subunit, it contacts several helices of the 16S rRNA. In the 70S ribosome it contacts the 23S rRNA (bridge B1a) and protein L5 of the 50S subunit (bridge B1b), connecting the 2 subunits; these bridges are implicated in subunit movement. Contacts the tRNAs in the A and P-sites. This Prochlorococcus marinus (strain SARG / CCMP1375 / SS120) protein is Small ribosomal subunit protein uS13.